Consider the following 407-residue polypeptide: Flagellar calcium-binding protein TB-44A (407 aa).

Residues 1–27 (MGCSASKDTTNSKDGAASKGGKDGKTT) are disordered. Positions 25-399 (KTTADRKVAW…LQVCGDPDGE (375 aa)) are 2 X 186 AA almost perfect repeats. The EF-hand 1 domain occupies 48 to 83 (ESKSRRIELFKRFDTNGTGKLSFREVLDGCYSILKL). Asp61, Asn63, Thr65, Lys67, and Glu72 together coordinate Ca(2+). The ancestral calcium site 2 stretch occupies residues 110 to 121 (GVGEEDLVEFLE). EF-hand domains lie at 130–165 (YDIF…WKEW), 167–202 (VDIT…KKLQ), and 237–272 (ESKS…ILKL). Asp143, Asp145, Ser147, Glu154, Asp180, Asn182, Ser184, Glu191, Asp250, Asn252, Thr254, Lys256, and Glu261 together coordinate Ca(2+). Positions 299 to 310 (GVGEEDLVEFLE) are ancestral calcium site 6. 2 consecutive EF-hand domains span residues 319 to 354 (YDIF…WKEW) and 356 to 391 (VDIT…KKLQ). The Ca(2+) site is built by Asp332, Asp334, Ser336, Glu343, Asp369, Asn371, Ser373, and Glu380.

The protein belongs to the calflagin family.

The protein resides in the cell projection. The protein localises to the cilium. Its subcellular location is the flagellum. Its function is as follows. May contribute to the rapid motility of the trypanosomes, playing a role either in flagellar structure or in calcium metabolism. Could alternate between a GDP-bound inactive form to a calcium/GTP-bound active form. The protein is Flagellar calcium-binding protein TB-44A of Trypanosoma brucei brucei.